A 619-amino-acid chain; its full sequence is Chaperone protein HscA homolog (619 aa).

It belongs to the heat shock protein 70 family.

Its function is as follows. Chaperone involved in the maturation of iron-sulfur cluster-containing proteins. Has a low intrinsic ATPase activity which is markedly stimulated by HscB. This chain is Chaperone protein HscA homolog, found in Shewanella amazonensis (strain ATCC BAA-1098 / SB2B).